The following is a 389-amino-acid chain: NAD-dependent protein deacetylase sirtuin-2 (389 aa).

Residues 1–34 (MAEPDPSHPLETQAGKVQEAQDSDSDSEGGAAGG) are disordered. An N-acetylalanine modification is found at A2. Residues S23, S25, S27, and S53 each carry the phosphoserine modification. The region spanning 57-338 (RLLDELTLEG…LALAELLGWK (282 aa)) is the Deacetylase sirtuin-type domain. Residues 85 to 89 (AGIST) and 95 to 97 (DFR) each bind NAD(+). S100 carries the post-translational modification Phosphoserine. 167–170 (QNID) serves as a coordination point for NAD(+). Residue H187 is the Proton acceptor of the active site. Residues C195 and C200 each contribute to the Zn(2+) site. The residue at position 207 (S207) is a Phosphoserine. 2 residues coordinate Zn(2+): C221 and C224. Residues 262–263 (TS), 286–288 (NKE), and C324 each bind NAD(+). The tract at residues 350 to 389 (ASIDAQSGAEAPNPSTSASPRKSPPPAQDEARTTEREKPQ) is disordered. 2 positions are modified to phosphoserine: S368 and S372. Positions 378–389 (DEARTTEREKPQ) are enriched in basic and acidic residues.

This sequence belongs to the sirtuin family. Class I subfamily. Interacts with CDC20, FOXO3 and FZR1. Associates with microtubules in primary cortical mature neurons. Homotrimer. Interacts (via both phosphorylated, unphosphorylated, active or inactive forms) with HDAC6; the interaction is necessary for the complex to interact with alpha-tubulin, suggesting that these proteins belong to a large complex that deacetylates the cytoskeleton. Interacts with FOXO1; the interaction is disrupted upon serum-starvation or oxidative stress, leading to increased level of acetylated FOXO1 and induction of autophagy. Interacts with RELA; the interaction occurs in the cytoplasm and is increased in a TNF-alpha-dependent manner. Interacts with HOXA10; the interaction is direct. Interacts with YWHAB and YWHAG; the interactions occur in a AKT-dependent manner and increase SIRT2-dependent TP53 deacetylation. Interacts with MAPK1/ERK2 and MAPK3/ERK1; the interactions increase SIRT2 stability and deacetylation activity. Interacts (phosphorylated form) with KMT5A isoform 2; the interaction is direct, stimulates KMT5A-mediated methyltransferase activity on histone at 'Lys-20' (H4K20me1) and is increased in a H(2)O(2)-induced oxidative stress-dependent manner. Interacts with G6PD; the interaction is enhanced by H(2)O(2) treatment. Interacts with a G1/S-specific cyclin E-CDK2 complex. Interacts with AURKA, CDK5R1 (p35 form) and CDK5 and HIF1A. Interacts with the tRNA ligase SARS1; recruited to the VEGFA promoter via interaction with SARS1. Interacts with BEX4; negatively regulates alpha-tubulin deacetylation by SIRT2. Zn(2+) is required as a cofactor. Phosphorylated at phosphoserine and phosphothreonine. Phosphorylated at Ser-368 by a mitotic kinase CDK1/cyclin B at the G2/M transition; phosphorylation regulates the delay in cell-cycle progression. Phosphorylated at Ser-368 by a mitotic kinase G1/S-specific cyclin E/Cdk2 complex; phosphorylation inactivates SIRT2-mediated alpha-tubulin deacetylation and thereby negatively regulates cell adhesion, cell migration and neurite outgrowth during neuronal differentiation. Phosphorylated by cyclin A/Cdk2 and p35-Cdk5 complexes and to a lesser extent by the cyclin D3/Cdk4 and cyclin B/Cdk1, in vitro. Dephosphorylated at Ser-368 by CDC14A and CDC14B around early anaphase. Post-translationally, acetylated by EP300; acetylation leads both to the decreased of SIRT2-mediated alpha-tubulin deacetylase activity and SIRT2-mediated down-regulation of TP53 transcriptional activity. In terms of processing, ubiquitinated.

It localises to the nucleus. Its subcellular location is the cytoplasm. The protein localises to the perinuclear region. The protein resides in the cytoskeleton. It is found in the microtubule organizing center. It localises to the centrosome. Its subcellular location is the centriole. The protein localises to the spindle. The protein resides in the midbody. It is found in the chromosome. It localises to the perikaryon. Its subcellular location is the cell projection. The protein localises to the growth cone. The protein resides in the myelin membrane. The enzyme catalyses N(6)-acetyl-L-lysyl-[protein] + NAD(+) + H2O = 2''-O-acetyl-ADP-D-ribose + nicotinamide + L-lysyl-[protein]. It carries out the reaction N(6)-tetradecanoyl-L-lysyl-[protein] + NAD(+) + H2O = 2''-O-tetradecanoyl-ADP-D-ribose + nicotinamide + L-lysyl-[protein]. It catalyses the reaction N(6)-hexadecanoyl-L-lysyl-[protein] + NAD(+) + H2O = 2''-O-hexadecanoyl-ADP-D-ribose + nicotinamide + L-lysyl-[protein]. Inhibited by Sirtinol, A3 and M15 small molecules. Inhibited by nicotinamide. Functionally, NAD-dependent protein deacetylase, which deacetylates internal lysines on histone and alpha-tubulin as well as many other proteins such as key transcription factors. Participates in the modulation of multiple and diverse biological processes such as cell cycle control, genomic integrity, microtubule dynamics, cell differentiation, metabolic networks, and autophagy. Plays a major role in the control of cell cycle progression and genomic stability. Functions in the antephase checkpoint preventing precocious mitotic entry in response to microtubule stress agents, and hence allowing proper inheritance of chromosomes. Positively regulates the anaphase promoting complex/cyclosome (APC/C) ubiquitin ligase complex activity by deacetylating CDC20 and FZR1, then allowing progression through mitosis. Associates both with chromatin at transcriptional start sites (TSSs) and enhancers of active genes. Plays a role in cell cycle and chromatin compaction through epigenetic modulation of the regulation of histone H4 'Lys-20' methylation (H4K20me1) during early mitosis. Specifically deacetylates histone H4 at 'Lys-16' (H4K16ac) between the G2/M transition and metaphase enabling H4K20me1 deposition by KMT5A leading to ulterior levels of H4K20me2 and H4K20me3 deposition throughout cell cycle, and mitotic S-phase progression. Deacetylates KMT5A modulating KMT5A chromatin localization during the mitotic stress response. Also deacetylates histone H3 at 'Lys-57' (H3K56ac) during the mitotic G2/M transition. During oocyte meiosis progression, may deacetylate histone H4 at 'Lys-16' (H4K16ac) and alpha-tubulin, regulating spindle assembly and chromosome alignment by influencing microtubule dynamics and kinetochore function. Deacetylates histone H4 at 'Lys-16' (H4K16ac) at the VEGFA promoter and thereby contributes to regulate expression of VEGFA, a key regulator of angiogenesis. Deacetylates alpha-tubulin at 'Lys-40' and hence controls neuronal motility, oligodendroglial cell arbor projection processes and proliferation of non-neuronal cells. Phosphorylation at Ser-368 by a G1/S-specific cyclin E-CDK2 complex inactivates SIRT2-mediated alpha-tubulin deacetylation, negatively regulating cell adhesion, cell migration and neurite outgrowth during neuronal differentiation. Deacetylates PARD3 and participates in the regulation of Schwann cell peripheral myelination formation during early postnatal development and during postinjury remyelination. Involved in several cellular metabolic pathways. Plays a role in the regulation of blood glucose homeostasis by deacetylating and stabilizing phosphoenolpyruvate carboxykinase PCK1 activity in response to low nutrient availability. Acts as a key regulator in the pentose phosphate pathway (PPP) by deacetylating and activating the glucose-6-phosphate G6PD enzyme, and therefore, stimulates the production of cytosolic NADPH to counteract oxidative damage. Maintains energy homeostasis in response to nutrient deprivation as well as energy expenditure by inhibiting adipogenesis and promoting lipolysis. Attenuates adipocyte differentiation by deacetylating and promoting FOXO1 interaction to PPARG and subsequent repression of PPARG-dependent transcriptional activity. Plays a role in the regulation of lysosome-mediated degradation of protein aggregates by autophagy in neuronal cells. Deacetylates FOXO1 in response to oxidative stress or serum deprivation, thereby negatively regulating FOXO1-mediated autophagy. Deacetylates a broad range of transcription factors and co-regulators regulating target gene expression. Deacetylates transcriptional factor FOXO3 stimulating the ubiquitin ligase SCF(SKP2)-mediated FOXO3 ubiquitination and degradation. Deacetylates HIF1A and therefore promotes HIF1A degradation and inhibition of HIF1A transcriptional activity in tumor cells in response to hypoxia. Deacetylates RELA in the cytoplasm inhibiting NF-kappaB-dependent transcription activation upon TNF-alpha stimulation. Inhibits transcriptional activation by deacetylating p53/TP53 and EP300. Also deacetylates EIF5A. Functions as a negative regulator on oxidative stress-tolerance in response to anoxia-reoxygenation conditions. Plays a role as tumor suppressor. In addition to protein deacetylase activity, also has activity toward long-chain fatty acyl groups and mediates protein-lysine demyristoylation and depalmitoylation of target proteins, such as ARF6 and KRAS, thereby regulating their association with membranes. This is NAD-dependent protein deacetylase sirtuin-2 (SIRT2) from Macaca fascicularis (Crab-eating macaque).